A 486-amino-acid polypeptide reads, in one-letter code: Cytosol aminopeptidase (486 aa).

Lysine 249 and aspartate 254 together coordinate Zn(2+). Lysine 261 is an active-site residue. Zn(2+) contacts are provided by aspartate 272, aspartate 331, and glutamate 333. The active site involves arginine 335.

This sequence belongs to the peptidase M17 family. In terms of assembly, homohexamer. The cofactor is Zn(2+).

The protein localises to the cytoplasm. It carries out the reaction Release of an N-terminal amino acid, Xaa-|-Yaa-, in which Xaa is preferably Leu, but may be other amino acids including Pro although not Arg or Lys, and Yaa may be Pro. Amino acid amides and methyl esters are also readily hydrolyzed, but rates on arylamides are exceedingly low.. It catalyses the reaction Release of N-terminal proline from a peptide.. Its function is as follows. Presumably involved in the processing and regular turnover of intracellular proteins. Catalyzes the removal of unsubstituted N-terminal amino acids from various peptides. In Encephalitozoon cuniculi (strain GB-M1) (Microsporidian parasite), this protein is Cytosol aminopeptidase.